Consider the following 318-residue polypeptide: Myoblast determination protein 1 (318 aa).

Methionine 1 is covalently cross-linked (Peptide (Met-Gly) (interchain with G-Cter in ubiquitin)). Lysine 104 bears the N6-methyllysine; by EHMT2 mark. The region spanning 109–160 (DRRKAATMRERRRLSKVNEAFETLKRCTSSNPNQRLPKVEILRNAIRYIEGL) is the bHLH domain. Disordered regions lie at residues 175 to 225 (AAFY…QNGY) and 265 to 318 (APAL…YQVL). Over residues 196–206 (SDASSPRSNCS) the composition is skewed to polar residues. Positions 265-274 (APALLLADAP) are enriched in low complexity. 2 stretches are compositionally biased toward polar residues: residues 287–298 (LSDTEQGTQTPS) and 307–318 (AGSNPNAIYQVL).

Interacts with SUV39H1. Efficient DNA binding requires dimerization with another bHLH protein. Seems to form active heterodimers with ITF-2. Interacts with DDX5. Interacts with CHD2. Interacts with TSC22D3 isoform 1 and isoform 4. Interacts with SETD3. Interacts with P-TEFB complex; promotes the transcriptional activity of MYOD1 through its CDK9-mediated phosphorylation. Interacts with CSRP3. Interacts with NUPR1. Acetylated by a complex containing EP300 and PCAF. The acetylation is essential to activate target genes. Conversely, its deacetylation by SIRT1 inhibits its function. In terms of processing, ubiquitinated on the N-terminus; which is required for proteasomal degradation. Post-translationally, phosphorylated by CDK9. This phosphorylation promotes its function in muscle differentiation. Methylation at Lys-104 by EHMT2/G9a inhibits myogenic activity.

It localises to the nucleus. Functionally, acts as a transcriptional activator that promotes transcription of muscle-specific target genes and plays a role in muscle differentiation. Together with MYF5 and MYOG, co-occupies muscle-specific gene promoter core region during myogenesis. Induces fibroblasts to differentiate into myoblasts. Interacts with and is inhibited by the twist protein. This interaction probably involves the basic domains of both proteins. This chain is Myoblast determination protein 1 (Myod1), found in Mus musculus (Mouse).